The following is a 311-amino-acid chain: CAAX prenyl protease 2 (311 aa).

Transmembrane regions (helical) follow at residues 14–34 (VATCVAMALFYVLILYVPTVI), 51–71 (FICAAICTVASLVFTAFILPI), and 94–114 (VVYPLLLTSLVYAGSLVLKLF). E164 acts as the Proton donor/acceptor in catalysis. The chain crosses the membrane as a helical span at residues 173–193 (IPLLLCAGFRINTAIFLCPVL). Catalysis depends on H198, which acts as the Proton donor/acceptor. The next 3 helical transmembrane spans lie at 219 to 239 (IVGLQLGYTVIFGAYASFLFI), 244 to 264 (LAAPLFAHIFCNYMGLPVLYA), and 268 to 288 (GLVSAAFLGGVVGFVLLLFPL).

The protein belongs to the peptidase U48 family. In terms of tissue distribution, expressed in seeds, stems, leaves, flowers and siliques.

It is found in the endoplasmic reticulum membrane. The catalysed reaction is Hydrolyzes the peptide bond -P2-(S-farnesyl or geranylgeranyl)C-P1'-P2'-P3'-COOH where P1' and P2' are amino acids with aliphatic sidechains and P3' is any C-terminal residue.. Its activity is regulated as follows. Inhibited in vitro by L-1-tosylamido-2-phenylethyl chloromethyl ketone (TPCK) and N-ethylmaleimide, but not by EDTA. In terms of biological role, protease involved in the processing of a variety of prenylated proteins containing the C-terminal CAAX motif, where C is a cysteine modified with an isoprenoid lipid, A is an aliphatic amino acid and X is any C-terminal amino acid. Proteolytically removes the C-terminal three residues of farnesylated and geranylated proteins, leaving the prenylated cysteine as the new C-terminus. The substrate specificity is only partially overlapping with that of FACE1. CAAX processing is likely required for subcellular targeting of prenylated proteins to the plasma membrane. The protein is CAAX prenyl protease 2 (FACE2) of Arabidopsis thaliana (Mouse-ear cress).